A 156-amino-acid chain; its full sequence is Lipoprotein signal peptidase (156 aa).

3 consecutive transmembrane segments (helical) span residues 5-25 (FFVV…TKQW), 63-83 (IEWQ…AIIA), and 90-110 (SNPY…GNLI). Active-site residues include Asp120 and Asp138. A helical transmembrane segment spans residues 133-153 (AFNVADMGICVGAFFVCLAVY).

This sequence belongs to the peptidase A8 family.

It is found in the cell inner membrane. It carries out the reaction Release of signal peptides from bacterial membrane prolipoproteins. Hydrolyzes -Xaa-Yaa-Zaa-|-(S,diacylglyceryl)Cys-, in which Xaa is hydrophobic (preferably Leu), and Yaa (Ala or Ser) and Zaa (Gly or Ala) have small, neutral side chains.. The protein operates within protein modification; lipoprotein biosynthesis (signal peptide cleavage). Its function is as follows. This protein specifically catalyzes the removal of signal peptides from prolipoproteins. In Oleidesulfovibrio alaskensis (strain ATCC BAA-1058 / DSM 17464 / G20) (Desulfovibrio alaskensis), this protein is Lipoprotein signal peptidase.